Reading from the N-terminus, the 183-residue chain is ATP synthase subunit b, chloroplastic (183 aa).

A helical membrane pass occupies residues 20-42 (INTNVFETNIINLAIVVGTLFYY).

It belongs to the ATPase B chain family. As to quaternary structure, F-type ATPases have 2 components, F(1) - the catalytic core - and F(0) - the membrane proton channel. F(1) has five subunits: alpha(3), beta(3), gamma(1), delta(1), epsilon(1). F(0) has four main subunits: a(1), b(1), b'(1) and c(10-14). The alpha and beta chains form an alternating ring which encloses part of the gamma chain. F(1) is attached to F(0) by a central stalk formed by the gamma and epsilon chains, while a peripheral stalk is formed by the delta, b and b' chains.

It localises to the plastid. The protein resides in the chloroplast thylakoid membrane. In terms of biological role, f(1)F(0) ATP synthase produces ATP from ADP in the presence of a proton or sodium gradient. F-type ATPases consist of two structural domains, F(1) containing the extramembraneous catalytic core and F(0) containing the membrane proton channel, linked together by a central stalk and a peripheral stalk. During catalysis, ATP synthesis in the catalytic domain of F(1) is coupled via a rotary mechanism of the central stalk subunits to proton translocation. Functionally, component of the F(0) channel, it forms part of the peripheral stalk, linking F(1) to F(0). In Euglena gracilis, this protein is ATP synthase subunit b, chloroplastic.